The following is a 61-amino-acid chain: Sodium/potassium-transporting ATPase subunit gamma (61 aa).

Residues 24 to 44 traverse the membrane as a helical segment; that stretch reads KGGLIFAAIAFVVGMLIIFSG.

Belongs to the FXYD family. Regulatory subunit of the sodium/potassium-transporting ATPase which is composed of a catalytic alpha subunit, an auxiliary non-catalytic beta subunit and an additional regulatory subunit.

The protein localises to the membrane. Its function is as follows. May be involved in forming the receptor site for cardiac glycoside binding or may modulate the transport function of the sodium ATPase. The protein is Sodium/potassium-transporting ATPase subunit gamma (fxyd2) of Xenopus laevis (African clawed frog).